Reading from the N-terminus, the 131-residue chain is Profilin-5 (131 aa).

Cys13 and Cys115 are oxidised to a cystine. The Involved in PIP2 interaction signature appears at 81 to 97 (VVIRGKKGTGGITIKKT). Thr111 carries the phosphothreonine modification.

Belongs to the profilin family. In terms of assembly, multimer. Occurs in many kinds of cells as a complex with monomeric actin in a 1:1 ratio. Post-translationally, phosphorylated by MAP kinases. In terms of tissue distribution, expressed in vegetative tissues. Present in shoots, roots and coleoptiles. Also detected in endosperm and pollen.

It localises to the cytoplasm. Its subcellular location is the cytoskeleton. Its activity is regulated as follows. Actin binding is enhanced by calcium Ca(2+). In terms of biological role, binds to actin and affects the structure of the cytoskeleton. At high concentrations, profilin prevents the polymerization of actin, whereas it enhances it at low concentrations. By binding to PIP2, it inhibits the formation of IP3 and DG. Has a high affinity for poly-proline. In Zea mays (Maize), this protein is Profilin-5.